Consider the following 1581-residue polypeptide: Pentafunctional AROM polypeptide (1581 aa).

A 3-dehydroquinate synthase region spans residues 1 to 384 (MPEPTKISIL…YEPKASVVPN (384 aa)). NAD(+)-binding positions include 44 to 46 (DTN), 81 to 84 (EVSK), 114 to 116 (GGV), and Asp-119. Arg-130 is a binding site for 7-phospho-2-dehydro-3-deoxy-D-arabino-heptonate. 139-140 (TT) is an NAD(+) binding site. Residues Asp-146 and Lys-152 each contribute to the 7-phospho-2-dehydro-3-deoxy-D-arabino-heptonate site. Lys-161 is a binding site for NAD(+). Asn-162 contacts 7-phospho-2-dehydro-3-deoxy-D-arabino-heptonate. Residues 179 to 182 (FLET) and Asn-190 each bind NAD(+). Glu-194 contacts Zn(2+). 7-phospho-2-dehydro-3-deoxy-D-arabino-heptonate contacts are provided by residues 194–197 (EVIK) and Lys-250. The active-site Proton acceptor; for 3-dehydroquinate synthase activity is Glu-260. 7-phospho-2-dehydro-3-deoxy-D-arabino-heptonate contacts are provided by residues 264–268 (RNLLN) and His-271. Residue His-271 participates in Zn(2+) binding. The active-site Proton acceptor; for 3-dehydroquinate synthase activity is the His-275. His-287 and Lys-356 together coordinate 7-phospho-2-dehydro-3-deoxy-D-arabino-heptonate. His-287 is a binding site for Zn(2+). Residues 397–842 (VHPGVPKESN…WDTLRQLFSV (446 aa)) form an EPSP synthase region. The active-site For EPSP synthase activity is Cys-824. Residues 864–1056 (SASVFIIGMR…KQKKHSFFVS (193 aa)) form a shikimate kinase region. 871-878 (GMRGAGKT) contributes to the ATP binding site. The interval 1057–1277 (LTLPDLRSAS…AAPGQLSATE (221 aa)) is 3-dehydroquinase. His-1180 functions as the Proton acceptor; for 3-dehydroquinate dehydratase activity in the catalytic mechanism. Lys-1208 (schiff-base intermediate with substrate; for 3-dehydroquinate dehydratase activity) is an active-site residue. The shikimate dehydrogenase stretch occupies residues 1290–1581 (KKRFAIFGNP…ARTAVLGDSA (292 aa)).

It in the N-terminal section; belongs to the sugar phosphate cyclases superfamily. Dehydroquinate synthase family. This sequence in the 2nd section; belongs to the EPSP synthase family. The protein in the 3rd section; belongs to the shikimate kinase family. In the 4th section; belongs to the type-I 3-dehydroquinase family. It in the C-terminal section; belongs to the shikimate dehydrogenase family. Homodimer. The cofactor is Zn(2+).

It localises to the cytoplasm. The catalysed reaction is 7-phospho-2-dehydro-3-deoxy-D-arabino-heptonate = 3-dehydroquinate + phosphate. It catalyses the reaction 3-dehydroquinate = 3-dehydroshikimate + H2O. It carries out the reaction shikimate + NADP(+) = 3-dehydroshikimate + NADPH + H(+). The enzyme catalyses shikimate + ATP = 3-phosphoshikimate + ADP + H(+). The catalysed reaction is 3-phosphoshikimate + phosphoenolpyruvate = 5-O-(1-carboxyvinyl)-3-phosphoshikimate + phosphate. Its pathway is metabolic intermediate biosynthesis; chorismate biosynthesis; chorismate from D-erythrose 4-phosphate and phosphoenolpyruvate: step 2/7. The protein operates within metabolic intermediate biosynthesis; chorismate biosynthesis; chorismate from D-erythrose 4-phosphate and phosphoenolpyruvate: step 3/7. It functions in the pathway metabolic intermediate biosynthesis; chorismate biosynthesis; chorismate from D-erythrose 4-phosphate and phosphoenolpyruvate: step 4/7. It participates in metabolic intermediate biosynthesis; chorismate biosynthesis; chorismate from D-erythrose 4-phosphate and phosphoenolpyruvate: step 5/7. Its pathway is metabolic intermediate biosynthesis; chorismate biosynthesis; chorismate from D-erythrose 4-phosphate and phosphoenolpyruvate: step 6/7. The AROM polypeptide catalyzes 5 consecutive enzymatic reactions in prechorismate polyaromatic amino acid biosynthesis. This is Pentafunctional AROM polypeptide from Aspergillus terreus (strain NIH 2624 / FGSC A1156).